Reading from the N-terminus, the 328-residue chain is Biotin synthase (328 aa).

In terms of domain architecture, Radical SAM core spans 48 to 275; sequence NRIQLSKLLN…KSHVRLTAGR (228 aa). 3 residues coordinate [4Fe-4S] cluster: Cys-63, Cys-67, and Cys-70. Residues Cys-107, Cys-138, Cys-198, and Arg-270 each coordinate [2Fe-2S] cluster.

The protein belongs to the radical SAM superfamily. Biotin synthase family. Homodimer. It depends on [4Fe-4S] cluster as a cofactor. [2Fe-2S] cluster is required as a cofactor.

It carries out the reaction (4R,5S)-dethiobiotin + (sulfur carrier)-SH + 2 reduced [2Fe-2S]-[ferredoxin] + 2 S-adenosyl-L-methionine = (sulfur carrier)-H + biotin + 2 5'-deoxyadenosine + 2 L-methionine + 2 oxidized [2Fe-2S]-[ferredoxin]. Its pathway is cofactor biosynthesis; biotin biosynthesis; biotin from 7,8-diaminononanoate: step 2/2. Functionally, catalyzes the conversion of dethiobiotin (DTB) to biotin by the insertion of a sulfur atom into dethiobiotin via a radical-based mechanism. The protein is Biotin synthase of Brucella ovis (strain ATCC 25840 / 63/290 / NCTC 10512).